We begin with the raw amino-acid sequence, 570 residues long: Sulfite reductase [NADPH] hemoprotein beta-component 1 (570 aa).

4 residues coordinate [4Fe-4S] cluster: Cys-434, Cys-440, Cys-479, and Cys-483. Position 483 (Cys-483) interacts with siroheme.

Belongs to the nitrite and sulfite reductase 4Fe-4S domain family. As to quaternary structure, alpha(8)-beta(8). The alpha component is a flavoprotein, the beta component is a hemoprotein. It depends on siroheme as a cofactor. [4Fe-4S] cluster is required as a cofactor.

The enzyme catalyses hydrogen sulfide + 3 NADP(+) + 3 H2O = sulfite + 3 NADPH + 4 H(+). It functions in the pathway sulfur metabolism; hydrogen sulfide biosynthesis; hydrogen sulfide from sulfite (NADPH route): step 1/1. In terms of biological role, component of the sulfite reductase complex that catalyzes the 6-electron reduction of sulfite to sulfide. This is one of several activities required for the biosynthesis of L-cysteine from sulfate. This is Sulfite reductase [NADPH] hemoprotein beta-component 1 from Klebsiella pneumoniae (strain 342).